Consider the following 1759-residue polypeptide: Putative ATP-dependent RNA helicase TDRD12 (1759 aa).

In terms of domain architecture, Tudor 1 spans 74–153; it reads FQNLEQVWFS…KLSNTETRAV (80 aa). Positions 480–495 are enriched in low complexity; it reads NSAASESSTKSSMDSS. The tract at residues 480–506 is disordered; it reads NSAASESSTKSSMDSSRISDEDDLSSD. In terms of domain architecture, Helicase ATP-binding spans 611–789; that stretch reads WGTILRGLST…DFLEPIVLKA (179 aa). ATP is bound at residue 624 to 631; sequence SPPRSGKT. Residues 823–980 form the Helicase C-terminal domain; sequence NVLQFIDSVQ…NVPKILDEVS (158 aa). Residues 1335–1394 form the Tudor 2 domain; it reads GSNVGDIVLAKFPDDSMYERARIDHIYSEDKVKCFFVDQGDWRDVSTNDLATITENFITQ. The region spanning 1618-1704 is the CS domain; it reads LSKPKICWSQ…LMCRNWLALT (87 aa).

Interacts (via Tudor domain 2) with Siwi. Component of the PET complex, at least composed of EXD1, SIWI, TDRD12 and piRNAs. Expressed in the yolk cells. Not detected in yolk granules.

The protein localises to the chromosome. It is found in the cytoplasm. The protein resides in the cytosol. It localises to the nucleus membrane. The catalysed reaction is ATP + H2O = ADP + phosphate + H(+). Functionally, probable ATP-binding RNA helicase required during spermatogenesis to repress transposable elements and preventing their mobilization, which is essential for the germline integrity. Acts via the piRNA metabolic process, which mediates the repression of transposable elements during meiosis by forming complexes composed of piRNAs and Piwi proteins and governs the methylation and subsequent repression of transposons. The chain is Putative ATP-dependent RNA helicase TDRD12 (TDRD12) from Bombyx mori (Silk moth).